Here is a 263-residue protein sequence, read N- to C-terminus: 3'-5' ssDNA/RNA exonuclease TatD (263 aa).

A divalent metal cation is bound by residues glutamate 91, histidine 127, and histidine 152.

Belongs to the metallo-dependent hydrolases superfamily. TatD-type hydrolase family. TatD subfamily. As to quaternary structure, monomer. It depends on Mg(2+) as a cofactor.

The protein localises to the cytoplasm. 3'-5' exonuclease that prefers single-stranded DNA and RNA. May play a role in the H(2)O(2)-induced DNA damage repair. The chain is 3'-5' ssDNA/RNA exonuclease TatD from Cronobacter turicensis (strain DSM 18703 / CCUG 55852 / LMG 23827 / z3032).